A 793-amino-acid polypeptide reads, in one-letter code: Nuclear cap-binding protein subunit 1 (793 aa).

Disordered regions lie at residues 1-30 (MSRRRHSDDSDDSDGQPHKRRRTSEPSEIE) and 668-692 (LARQHKRRDSDDDDRSSDREDGPLE). One can recognise an MIF4G domain in the interval 30 to 242 (EERLESLICR…CLWSQIQKLK (213 aa)). Residues 683-692 (SSDREDGPLE) show a composition bias toward basic and acidic residues. Residues 686–716 (REDGPLEEQIERLQEKVESAQSEQKNLFLVI) adopt a coiled-coil conformation.

This sequence belongs to the NCBP1 family. Component of the nuclear cap-binding complex (CBC), a heterodimer composed of NCBP1/CBP80 and NCBP2/CBP20 that interacts with m7GpppG-capped RNA. Component of an alternative nuclear cap-binding complex (CBC) composed of NCBP1/CBP80 and NCBP3.

It is found in the nucleus. Its subcellular location is the cytoplasm. Component of the cap-binding complex (CBC), which binds cotranscriptionally to the 5'-cap of pre-mRNAs and is involved in various processes such as pre-mRNA splicing, translation regulation, nonsense-mediated mRNA decay, RNA-mediated gene silencing (RNAi) by microRNAs (miRNAs) and mRNA export. The CBC complex is involved in mRNA export from the nucleus, leading to the recruitment of the mRNA export machinery to the 5'-end of mRNA and to mRNA export in a 5' to 3' direction through the nuclear pore. The CBC complex is also involved in mediating U snRNA and intronless mRNAs export from the nucleus. The CBC complex is essential for a pioneer round of mRNA translation, before steady state translation when the CBC complex is replaced by cytoplasmic cap-binding protein eIF4E. The pioneer round of mRNA translation mediated by the CBC complex plays a central role in nonsense-mediated mRNA decay (NMD), NMD only taking place in mRNAs bound to the CBC complex, but not on eIF4E-bound mRNAs. The CBC complex enhances NMD in mRNAs containing at least one exon-junction complex (EJC), promoting the interaction between UPF1 and UPF2. The CBC complex is also involved in 'failsafe' NMD, which is independent of the EJC complex, while it does not participate in Staufen-mediated mRNA decay (SMD). During cell proliferation, the CBC complex is also involved in microRNAs (miRNAs) biogenesis via its interaction with SRRT/ARS2 and is required for miRNA-mediated RNA interference. The CBC complex also acts as a negative regulator of PARN, thereby acting as an inhibitor of mRNA deadenylation. In the CBC complex, NCBP1/CBP80 does not bind directly capped RNAs (m7GpppG-capped RNA) but is required to stabilize the movement of the N-terminal loop of NCBP2/CBP20 and lock the CBC into a high affinity cap-binding state with the cap structure. Associates with NCBP3 to form an alternative cap-binding complex (CBC) which plays a key role in mRNA export. The conventional CBC with NCBP2 binds both small nuclear RNA (snRNA) and messenger (mRNA) and is involved in their export from the nucleus whereas the alternative CBC with NCBP3 does not bind snRNA and associates only with mRNA thereby playing a role only in mRNA export. In Gallus gallus (Chicken), this protein is Nuclear cap-binding protein subunit 1 (NCBP1).